A 798-amino-acid chain; its full sequence is Probable G-protein coupled receptor 156 (798 aa).

Residues 1-49 are Extracellular-facing; the sequence is MEPEINCSEFCDSFPGQELDRRPLHDLCKTTITESQHSSTAASPLSPAL. N6 is a glycosylation site (N-linked (GlcNAc...) asparagine). The helical transmembrane segment at 50-70 threads the bilayer; that stretch reads LGIMWTFLSCGLLLVLFFLAF. The Cytoplasmic segment spans residues 71–86; that stretch reads TIRCRKNRIVKMSSPN. The chain crosses the membrane as a helical span at residues 87–107; it reads LNVVTLLGSCLTYISAYLFGI. At 108 to 118 the chain is on the extracellular side; the sequence is QDALEGSSVEA. A helical transmembrane segment spans residues 119-139; sequence LIQTRLSLLCIGTSLVFGPIL. Residues 140 to 164 lie on the Cytoplasmic side of the membrane; sequence GKSWRLYKVFTQRVPDKRVIIKDLQ. The helical transmembrane segment at 165 to 185 threads the bilayer; the sequence is LLGLVAALVVADVILLVTWVL. Residues 186–222 are Extracellular-facing; sequence TDPIQCLQMLGVSMKVTGRDVSCSLTNTHFCASRYSD. The helical transmembrane segment at 223-243 threads the bilayer; the sequence is VWIALVLGCKGLLLLYGAYLA. Residues 244–257 are Cytoplasmic-facing; that stretch reads GLTNHVSSPPVNQS. A helical membrane pass occupies residues 258–278; it reads LTIMVGVNLLLLTAGLLFVVT. Residues 279–288 are Extracellular-facing; the sequence is RYLHSWPNLV. Residues 289–309 form a helical membrane-spanning segment; that stretch reads FGLTSGGIFVCTTTVNCCVFI. Residues 310 to 798 are Cytoplasmic-facing; that stretch reads PQLKQWKAFE…FKDDLKPTLV (489 aa). Residues 353 to 390 are a coiled coil; sequence DEKSCMERLLTEKNAVIESLQEQVSNAKEKLVKLMSAE. 3 disordered regions span residues 441-497, 546-666, and 693-715; these read HVQG…PMAP, SEAP…KQCE, and PAAPCLPSSPALPRQRQPRPRLS. Residues 479 to 492 show a composition bias toward basic and acidic residues; it reads PKAEQSEGPERGDQ. A compositionally biased stretch (polar residues) spans 559 to 572; sequence LWKSTTSRSPQKLS. Positions 583-594 are enriched in basic residues; the sequence is VRRRRAAQRARS. Positions 606 to 624 are enriched in polar residues; sequence HQANSTVSSSQSGLIVQNR. Residues 639–648 show a composition bias toward low complexity; that stretch reads PRSSSVKPSP.

Belongs to the G-protein coupled receptor 3 family. GABA-B receptor subfamily. In terms of tissue distribution, expressed in the outer and inner hair cells of the organ of Corti (at protein level). Expressed in the utricle and saccule within the vestibule (at protein level).

Its subcellular location is the cell membrane. The protein resides in the postsynaptic cell membrane. Orphan G-protein coupled receptor involved in the regulation of hair cell orientation in mechanosensory organs of the inner ear. It is required to trigger a 180 degree reversal in hair cell orientation, creating a virtual line of polarity reversal (LPR) across which stereociliary bundles are arranged in opposite orientations. The protein is Probable G-protein coupled receptor 156 (Gpr156) of Mus musculus (Mouse).